The chain runs to 109 residues: Enhancer of rudimentary homolog (109 aa).

This sequence belongs to the E(R) family. Homodimer.

Its function is as follows. May have a role in the cell cycle. The sequence is that of Enhancer of rudimentary homolog from Arabidopsis thaliana (Mouse-ear cress).